Reading from the N-terminus, the 110-residue chain is Ribonuclease P protein component 4 (110 aa).

Residues cysteine 65, cysteine 68, cysteine 94, and cysteine 97 each coordinate Zn(2+).

It belongs to the eukaryotic/archaeal RNase P protein component 4 family. In terms of assembly, consists of a catalytic RNA component and at least 4-5 protein subunits. Requires Zn(2+) as cofactor.

The protein resides in the cytoplasm. The catalysed reaction is Endonucleolytic cleavage of RNA, removing 5'-extranucleotides from tRNA precursor.. Its function is as follows. Part of ribonuclease P, a protein complex that generates mature tRNA molecules by cleaving their 5'-ends. This is Ribonuclease P protein component 4 from Methanococcus maripaludis (strain C7 / ATCC BAA-1331).